The primary structure comprises 230 residues: Orotidine 5'-phosphate decarboxylase (230 aa).

Residues Asp-10, Lys-31, 58–67 (DLKLHDIPNT), Thr-117, Arg-179, Gln-188, Gly-208, and Arg-209 each bind substrate. The active-site Proton donor is Lys-60.

Belongs to the OMP decarboxylase family. Type 1 subfamily. Homodimer.

The catalysed reaction is orotidine 5'-phosphate + H(+) = UMP + CO2. It functions in the pathway pyrimidine metabolism; UMP biosynthesis via de novo pathway; UMP from orotate: step 2/2. Catalyzes the decarboxylation of orotidine 5'-monophosphate (OMP) to uridine 5'-monophosphate (UMP). The polypeptide is Orotidine 5'-phosphate decarboxylase (Staphylococcus aureus (strain USA300)).